The sequence spans 166 residues: NADH-ubiquinone oxidoreductase chain 6 (166 aa).

5 consecutive transmembrane segments (helical) span residues 1–21 (MMYF…AFAS), 26–46 (IYGG…VVSL), 47–67 (GGSF…LVVF), 87–107 (VFTN…YFSG), and 139–159 (CGGW…FVVL).

It belongs to the complex I subunit 6 family. Core subunit of respiratory chain NADH dehydrogenase (Complex I) which is composed of 45 different subunits.

Its subcellular location is the mitochondrion inner membrane. It carries out the reaction a ubiquinone + NADH + 5 H(+)(in) = a ubiquinol + NAD(+) + 4 H(+)(out). In terms of biological role, core subunit of the mitochondrial membrane respiratory chain NADH dehydrogenase (Complex I) which catalyzes electron transfer from NADH through the respiratory chain, using ubiquinone as an electron acceptor. Essential for the catalytic activity and assembly of complex I. The protein is NADH-ubiquinone oxidoreductase chain 6 (MT-ND6) of Ornithorhynchus anatinus (Duckbill platypus).